Consider the following 323-residue polypeptide: Transcription factor LUX (323 aa).

Disordered regions lie at residues 1–25, 53–139, and 267–298; these read MGEE…WEMG, ERSR…DLSG, and GYHH…ESNP. The segment covering 65 to 87 has biased composition (low complexity); sequence SETTLSSLRGGSSGPNTSSSNNN. A DNA-binding region (myb-like GARP) is located at residues 139 to 200; that stretch reads GKTLKRPRLV…HLQKYRLYLK (62 aa).

As to quaternary structure, interacts with ELF3 and forms a complex with ELF3 and ELF4.

The protein localises to the nucleus. Functionally, transcription factor that is essential for the generation of the circadian clock oscillation. Is necessary for activation of CCA1 and LHY expression. Is coregulated with TOC1 and seems to be repressed by CCA1 and LHY by direct binding of these proteins to the evening element in the LUX promoter. Directly regulates the expression of PRR9, a major component of the morning transcriptional feedback circuit, by binding specific sites on PRR9 promoter. Binds to its own promoter, inducing a negative auto-regulatory feedback loop within the core clock. Binds to ELF3 and associates with ELF4 in a diurnal complex which is required for the expression of the growth-promoting transcription factors PIF4 and PIF5 and subsequent hypocotyl growth in the early evening. This is Transcription factor LUX (LUX) from Arabidopsis thaliana (Mouse-ear cress).